The following is a 452-amino-acid chain: Zinc finger protein 672 (452 aa).

4 consecutive C2H2-type zinc fingers follow at residues 14 to 36 (YSCSECGKSFCYSSVLLRHERAH), 42 to 64 (FRCLECGERCARAADLRAHRRTH), 70 to 92 (YICSECGQSFRHSGRLDLHLGAH), and 99 to 122 (CPCRTCGRRFPHLPALLLHRRRQH). A C2H2-type 5; degenerate zinc finger spans residues 128–150 (RRCPLCARTFRQSALLFHQARAH). 9 C2H2-type zinc fingers span residues 163–185 (HRCAQCPRAFRSGAGLRSHARIH), 199–221 (HQCGVCGKCFGKSSTLTRHLQTH), 227–249 (FKCPECGKGFLESATLVRHQRTH), 255–277 (YACGDCGRCFSESSTLLRHRRSH), 283–305 (HACATCGKGFGQRSDLVVHQRIH), 311–333 (FACPECGRRFSDRSDLTKHRRTH), 339–361 (YRCELCGKRFTCVSNLNVHRRNH), 367–389 (HKCPECSKAFSVASKLALHRKTH), and 395–417 (AECAECGKCFSHSRSLSQHQRAH).

This sequence belongs to the krueppel C2H2-type zinc-finger protein family.

It is found in the nucleus. May be involved in transcriptional regulation. In Homo sapiens (Human), this protein is Zinc finger protein 672.